We begin with the raw amino-acid sequence, 206 residues long: Purine nucleoside phosphorylase aq_167 (206 aa).

Positions 42, 78, and 93 each coordinate Zn(2+).

It belongs to the purine nucleoside phosphorylase YfiH/LACC1 family. In terms of assembly, homodimer. Cu(2+) serves as cofactor. The cofactor is Zn(2+).

It catalyses the reaction adenosine + phosphate = alpha-D-ribose 1-phosphate + adenine. The enzyme catalyses S-methyl-5'-thioadenosine + phosphate = 5-(methylsulfanyl)-alpha-D-ribose 1-phosphate + adenine. The catalysed reaction is inosine + phosphate = alpha-D-ribose 1-phosphate + hypoxanthine. It carries out the reaction adenosine + H2O + H(+) = inosine + NH4(+). Purine nucleoside enzyme that catalyzes the phosphorolysis of adenosine and inosine nucleosides, yielding D-ribose 1-phosphate and the respective free bases, adenine and hypoxanthine. Also catalyzes the phosphorolysis of S-methyl-5'-thioadenosine into adenine and S-methyl-5-thio-alpha-D-ribose 1-phosphate. Also has adenosine deaminase activity. The chain is Purine nucleoside phosphorylase aq_167 from Aquifex aeolicus (strain VF5).